The following is a 434-amino-acid chain: Elongation factor 1-alpha (434 aa).

Positions 5-232 (KPHINLVVIG…DNVHPPKRPV (228 aa)) constitute a tr-type G domain. Positions 14 to 21 (GHVVAGKS) are G1. GTP is bound at residue 14 to 21 (GHVVAGKS). The segment at 70–74 (GITID) is G2. The G3 stretch occupies residues 91–94 (DAPG). Residues 91 to 95 (DAPGH) and 153 to 156 (NKMD) each bind GTP. The G4 stretch occupies residues 153–156 (NKMD). Residues 196–198 (SGF) are G5.

This sequence belongs to the TRAFAC class translation factor GTPase superfamily. Classic translation factor GTPase family. EF-Tu/EF-1A subfamily.

The protein localises to the cytoplasm. Its function is as follows. This protein promotes the GTP-dependent binding of aminoacyl-tRNA to the A-site of ribosomes during protein biosynthesis. This chain is Elongation factor 1-alpha, found in Blastocystis hominis.